The primary structure comprises 287 residues: Phosphatidylserine decarboxylase proenzyme (287 aa).

Active-site charge relay system; for autoendoproteolytic cleavage activity residues include aspartate 90, histidine 147, and serine 252. The Schiff-base intermediate with substrate; via pyruvic acid; for decarboxylase activity role is filled by serine 252. Serine 252 is subject to Pyruvic acid (Ser); by autocatalysis.

It belongs to the phosphatidylserine decarboxylase family. PSD-B subfamily. Prokaryotic type I sub-subfamily. Heterodimer of a large membrane-associated beta subunit and a small pyruvoyl-containing alpha subunit. Pyruvate is required as a cofactor. Post-translationally, is synthesized initially as an inactive proenzyme. Formation of the active enzyme involves a self-maturation process in which the active site pyruvoyl group is generated from an internal serine residue via an autocatalytic post-translational modification. Two non-identical subunits are generated from the proenzyme in this reaction, and the pyruvate is formed at the N-terminus of the alpha chain, which is derived from the carboxyl end of the proenzyme. The autoendoproteolytic cleavage occurs by a canonical serine protease mechanism, in which the side chain hydroxyl group of the serine supplies its oxygen atom to form the C-terminus of the beta chain, while the remainder of the serine residue undergoes an oxidative deamination to produce ammonia and the pyruvoyl prosthetic group on the alpha chain. During this reaction, the Ser that is part of the protease active site of the proenzyme becomes the pyruvoyl prosthetic group, which constitutes an essential element of the active site of the mature decarboxylase.

Its subcellular location is the cell membrane. It catalyses the reaction a 1,2-diacyl-sn-glycero-3-phospho-L-serine + H(+) = a 1,2-diacyl-sn-glycero-3-phosphoethanolamine + CO2. It functions in the pathway phospholipid metabolism; phosphatidylethanolamine biosynthesis; phosphatidylethanolamine from CDP-diacylglycerol: step 2/2. In terms of biological role, catalyzes the formation of phosphatidylethanolamine (PtdEtn) from phosphatidylserine (PtdSer). This chain is Phosphatidylserine decarboxylase proenzyme, found in Pseudomonas entomophila (strain L48).